Here is a 336-residue protein sequence, read N- to C-terminus: GTPase Obg (336 aa).

In terms of domain architecture, Obg spans 1 to 159 (MKFVDEATLI…KTLKLELKLL (159 aa)). The 170-residue stretch at 160–329 (ADVGLVGLPN…LIEAIFAQLR (170 aa)) folds into the OBG-type G domain. GTP is bound by residues 166 to 173 (GLPNAGKS), 191 to 195 (FTTLA), 213 to 216 (DIPG), 283 to 286 (NKMD), and 310 to 312 (SAI). Serine 173 and threonine 193 together coordinate Mg(2+).

Belongs to the TRAFAC class OBG-HflX-like GTPase superfamily. OBG GTPase family. In terms of assembly, monomer. The cofactor is Mg(2+).

It localises to the cytoplasm. In terms of biological role, an essential GTPase which binds GTP, GDP and possibly (p)ppGpp with moderate affinity, with high nucleotide exchange rates and a fairly low GTP hydrolysis rate. Plays a role in control of the cell cycle, stress response, ribosome biogenesis and in those bacteria that undergo differentiation, in morphogenesis control. The chain is GTPase Obg from Desulfatibacillum aliphaticivorans.